Here is a 486-residue protein sequence, read N- to C-terminus: FAD-dependent oxidoreductase domain-containing protein 1 (486 aa).

The helical transmembrane segment at 66 to 82 (VVIVGGGVLGLSVAYWL) threads the bilayer.

Associates with components of the mitochondrial respiratory chain complex I. The cofactor is FAD.

It is found in the mitochondrion inner membrane. In terms of biological role, required for the assembly of the mitochondrial membrane respiratory chain NADH dehydrogenase (Complex I). Involved in mid-late stages of complex I assembly. The sequence is that of FAD-dependent oxidoreductase domain-containing protein 1 (FOXRED1) from Bos taurus (Bovine).